Here is a 457-residue protein sequence, read N- to C-terminus: Multidrug resistance protein MdtK (457 aa).

12 helical membrane-spanning segments follow: residues 11-31, 53-73, 93-113, 127-147, 160-180, 188-208, 243-263, 276-296, 314-334, 350-370, 387-407, and 418-438; these read LLALAIPVILAQVAQTAMGFV, IWLPAILFGHGLLLALTPVIA, WLAGFVSVLVMIVLWNAGYII, AVGYLRALLWGAPGYLFFQVA, GMVMGFLGLLVNIPVNYIFIY, LGGIGCGVATAAVYWVMFIAM, LPIALALFFEVTLFAVVALLV, IALNFSSLMFVLPMSLAAAVT, AARTGLGVGICMAVVTAIFTV, VVALAAQLMLLAAVYQISDSI, IFFITFTAYWVLGLPSGYILA, and PAGFWMGFIIGLTSAAVLMML.

This sequence belongs to the multi antimicrobial extrusion (MATE) (TC 2.A.66.1) family. MdtK subfamily.

It localises to the cell inner membrane. Its function is as follows. Multidrug efflux pump that functions probably as a Na(+)/drug antiporter. The sequence is that of Multidrug resistance protein MdtK from Salmonella newport (strain SL254).